The sequence spans 506 residues: Maturase K (506 aa).

The protein belongs to the intron maturase 2 family. MatK subfamily.

It is found in the plastid. Its subcellular location is the chloroplast. Its function is as follows. Usually encoded in the trnK tRNA gene intron. Probably assists in splicing its own and other chloroplast group II introns. This chain is Maturase K, found in Lactuca sativa (Garden lettuce).